Consider the following 3411-residue polypeptide: MSGRKAQGKTLGVNMVRRGVRSLSNKIKQKTKQIGNRPGPSRGVQGFIFFFLFNILTGKKITAQLKRLWKMLDPRQGLAALRKVKRVVAGLMRGLSSRKRRSHDVLTVQFLILGMLLMTGGVTLMRKNRWLLLNVTSEDLGKTFSIGTGNCTTNILEAKYWCPDSMEYNCPNLSPREEPDDIDCWCYGVENVRVTYGKCDSAGRSRRSRRAIDLPTHENHGLKTRQEKWMTGRMGERQLQKIERWFVRNPFFAVTALTIAYLVGSNMTQRVVIALLVLAVGPAYSAHCIGVADRDFIEGVHGGTWVSATLEQDKCVTVMAPDKPSLDISLETVAIDGPVEARKVCYNAVLTHVKIDDKCPSTGEAHLAEENEGDNACKRTYSDRGWGNGCGLFGKGSIVACAKFTCAKSMSLFEVDQTKIQYVIKAQLHVGAKQEDWKTDIKTLKFDVLSGSQEAEFTGYGKVTLECQVQTAVDFGNSYIAEMEKESWIVDRQWAQDLTLPWQSGSGGVWREMHHLVEFEPPHAATIRVLALGDQEGSLKTALTGAMRVTKDTNDNNLYKLHGGHVSCRVKLSALTLKGTSYKMCTDKMSFVKNPTDTGHGTVVMQVKVPKGAPCKIPVIVADDLTAAINKGILVTVNPIASTNDDEVLIEVNPPFGDSYIIIGTGDSRLTYQWHKEGSSIGKLFTQTMKGAERLAVMGDAAWDFSSAGGFFTSVGKGIHTVFGSAFQGLFGGLNWITKVIMGAVLIWVGFNTRNMTMSMSMILVGVIMMFLSLGVGADQGCAINFGKRELKCGDGIFIFRDSDDWLNKYSYYPEDPVKLASIVKASFEEGKCGLNSVDSLEHEMWRSRADEINAILEENEVDISVVVQDPKNVYQRGTHPFSRIRDGLQYGWKTWGKNLVFSPGRKNGSFIIDGKSRKECPFSNRVWNSFQIEEFGTGVFTTRVYMDAVFEYTIDCDGSILGAAVNGKKSAHGSPTFWMGSHEVNGTWMIHTLEALDYKECEWPLTHTIGTSVEESEMFMPRSIGGPVSSHNHIPGYKVQTNGPWMQVPLEVKREACPGTSVIIDGNCDGRGKSTRSTTDSGKIIPEWCCRSCTMPPVSFHGSDGCWYPMEIRPMKTHESHLVRSWVTAGEIHAVPFGLVSMMIAMEVVLRKRQGPKQVLVGGVVLLGAMLVGQVTLLDLLELTVAVGLHFHEMNNGGDAMYMALIAAFSVRPGLLIGFGLRTLWSPRERLVLALGAAMVEIALGGMMGGLWKYLNAVSLCILTINAVASRKASNAILPLMALLTPVTMAEVRLATMLFCTVVIIGVLHQNSKDTSMQKTIPLVALTLTSYLGLTQPFLGLCAFLATRIFGRRSIPVNEALAATGLVGVLAGLAFQEMENFLGPIAVGGILMMLVSVAGRVDGLELKKLGEVSWEEEAEISGSSARYDVALSEQGEFKLLSEEKVPWDQVVMTSLALVGAAIHPFALLLVLAGWLFHVRRARRSGDVLWDIPTPKIIEECEHLEDGIYGIFQSTFLGASQRGVGVAQGGVFHTMWHVTRGAFLVWNGKKLIPSWASVKEDLVAYGGSWKLEGRWDGEEEVQLIAAAPGKNVVNVQTKPSLFKVRNGGEIGAVALDYPSGTSGSPIVNRNGEVIGLYGNGILVGDNSFVSAISQTEVKEEGKEELQEIPTMLKKGKTTILDFHPGAGKTRRFLPQILAECARRRLRTLVLAPTRVVLSEMKEAFHGLDVKFHTQAFSAHGSGREVIDVMCHATLTYRMLEPTRIVNWEVIIMDEAHFLDPASIAARGWAAHRARANESATILMTATPPGTSDEFPHSNGEIEDVQTDIPSEPWNTGHDWILADKRPTAWFLPSIRAANVMAASLRKAGKSVVVLNRKTFEREYPTIKQKKPDFILATDIAEMGANLCVERVLDCRTAFKPVLVDEGRKVAIKGPLRISASSAAQRRGRIGRNPNRDGDSYYYSEPTSEDNAHHVCWLEASMLLDNMEVRGGMVAPLYGVEGIKTPVSPGEMRLRDDQRKVFRELVRNCDLPVWLSWQVAKAGLKTNDRKWCFEGPEEHEILNDSGETVKCRAPGGAKKPLRPRWCDERVSSDQSALSEFIKFAEGRRGAADVLVVLSELPDFLAKKGGEAMDTISVFLHSEEGSRAYRNALSMMPEAMTIVMLFLLAGLLTSGMVIFFMSPKGISRMSMAKGTMAGCGYLMFLGGVEPTHISYIMLIFFVLMVVVIPEPGQQRSIQDNQVAFLIIGILTLVSVVAANELGMLEKTKEDLFGKKNLIPSGASPWSWPDLDLKPGAAWTVYVGIVTMLSPMLHHWIKVEYGNLSLSGIAQSASVLSFMDKGIPFMKMNISVIMLLVSGWNSITVMPLLCGIGCAMLHWSLILPGIKAQQSKLAQRRVFHGVAKNPVVDGNPTVDIEEAPEMPALYEKKLALYLLLALSLASVAMCRTPFSLDEGIVLASAALGPLIEGNTSLLWNGPMAVSMTGVMRGNYYAFVGVAYNLWKMKTARRGTANGKTLGEVWKRELNLLDKQQFELYKRTDIVEVDRDTARRHLAEGKVDTGVAVSRGTAKLRWFHERGYVKLEGRVIDLGCGRGGWCYYAAAQKEVSGVKGFTLGRDGHEKPMNVQSLGWNIITFKDKTDVHPLEPVKCDTLLCDIGESSSSSVTEGERTVRVLDTVEKWLACGVDNFCVKVLAPYMRDVLEKLELLQRRFGGTVIRNPLSRNSTHEMYYVSGARSNVTFTVNQTSRLLMRRMRRPTGKVTLEADVTLPIGTRSVETDKGPLDKEAIKERVERIKSEYMTSWFYDNDNPYRTWHYCGSYVTKTSGSAASMVNGVIKLLTYPWDKIEEVTRMAMTDTTPFGQQRVFKEKVDTRAKDPPAGTRKIMKVVNRWLFRHLAREKNPRLCTKEEFIAKVRSHAAIGAYLEEQDQWKTANEAVQDPKFWELVDEERKLHQQGRCRTCVYNMMGKREKKLSEFGKAKGSRAIWYMWLGARYLEFEALGFLNEDHWASRENSGGGVEGIGLQYLGYVIRDLAAMDGGGLYADDTAGWDTRITEADLDDEQEILNYMSPHHKKLAQAVMEMTYKNKVVKVLRPAPGGKAYMDVISRRDQRGSGQVVTYALNTITNLKVQLIRMAEAEMVIHHQHVQDCDESVLTRLEAWLTEHGCDRLRRMAVSGDDCVVRPIDDRFGLALSHLNAMSKVRKDISEWQPSKGWNDWENVPFCSHHFHELQLKDGRRIVVPCREQDELIGRGRVSPGNGWMIKETACLSKAYANMWSLMYFHKRDMRLLSLAVSSAVPTSWVPQGRTTWSIHGKGEWMTTEDRLEVWNRVWITNNPHMQDKTMVKEWRDVPYLTKRQDKLCGSLIGMTNRATWASNIHLVIHRIRTLVGQEKYTDYLTVMDRYSVDADLQPGELI.

Residues methionine 1–aspartate 104 lie on the Cytoplasmic side of the membrane. A hydrophobic; homodimerization of capsid protein C region spans residues proline 38 to leucine 72. Positions serine 102–glycine 121 are cleaved as a propeptide — ER anchor for the capsid protein C, removed in mature form by serine protease NS3. Residues valine 105 to methionine 125 form a helical membrane-spanning segment. Residues arginine 126–arginine 244 lie on the Extracellular side of the membrane. 2 N-linked (GlcNAc...) asparagine; by host glycosylation sites follow: asparagine 134 and asparagine 150. The chain crosses the membrane as a helical span at residues tryptophan 245–serine 265. The Cytoplasmic segment spans residues asparagine 266–arginine 270. The helical transmembrane segment at valine 271 to serine 285 threads the bilayer. The Extracellular segment spans residues alanine 286 to leucine 730. Intrachain disulfides connect cysteine 288/cysteine 315, cysteine 345/cysteine 401, cysteine 345/cysteine 406, cysteine 359/cysteine 390, cysteine 377/cysteine 401, cysteine 377/cysteine 406, cysteine 467/cysteine 568, and cysteine 585/cysteine 615. The interval aspartate 383–glycine 396 is fusion peptide. A helical membrane pass occupies residues phenylalanine 731–phenylalanine 751. Topologically, residues asparagine 752–threonine 757 are cytoplasmic. The chain crosses the membrane as a helical span at residues methionine 758–alanine 778. Over aspartate 779–glutamate 1132 the chain is Extracellular. Cystine bridges form between cysteine 782-cysteine 793, cysteine 833-cysteine 921, cysteine 957-cysteine 1002, cysteine 1058-cysteine 1107, cysteine 1069-cysteine 1091, and cysteine 1090-cysteine 1094. Residues asparagine 908 and asparagine 986 are each glycosylated (N-linked (GlcNAc...) asparagine; by host). A helical transmembrane segment spans residues isoleucine 1133–lysine 1153. Residues arginine 1154–alanine 1201 are Cytoplasmic-facing. A helical transmembrane segment spans residues methionine 1202–leucine 1222. The Lumenal portion of the chain corresponds to arginine 1223–proline 1287. The chain crosses the membrane as a helical span at residues valine 1288–valine 1308. The Cytoplasmic portion of the chain corresponds to leucine 1309 to serine 1355. A helical membrane pass occupies residues isoleucine 1356 to phenylalanine 1376. Residues glutamine 1377 to glutamate 1378 lie on the Lumenal side of the membrane. A helical membrane pass occupies residues methionine 1379–alanine 1399. Over glycine 1400–leucine 1456 the chain is Cytoplasmic. Residues leucine 1407 to valine 1446 are interacts with and activates NS3 protease. The segment at residues alanine 1457–phenylalanine 1477 is an intramembrane region (helical). Topologically, residues histidine 1478 to alanine 2157 are cytoplasmic. Residues serine 1485 to leucine 1665 form the Peptidase S7 domain. Active-site charge relay system; for serine protease NS3 activity residues include histidine 1537, aspartate 1561, and serine 1622. The Helicase ATP-binding domain occupies proline 1669 to glutamine 1825. The important for RNA-binding stretch occupies residues lysine 1673–lysine 1676. Phenylalanine 1682–threonine 1689 lines the ATP pocket. The DEAH box motif lies at aspartate 1773–histidine 1776. The 178-residue stretch at glutamate 1820–tyrosine 1997 folds into the Helicase C-terminal domain. Position 1877 is an N6-acetyllysine; by host (lysine 1877). Residues alanine 1942 to tyrosine 1961 are disordered. Residues methionine 2158–phenylalanine 2178 traverse the membrane as a helical segment. The Lumenal portion of the chain corresponds to methionine 2179–arginine 2186. The helical intramembrane region spans methionine 2187–glutamate 2207. Over proline 2208 to threonine 2209 the chain is Lumenal. A helical membrane pass occupies residues histidine 2210 to glycine 2230. Residues glutamine 2231 to alanine 2241 are Cytoplasmic-facing. The helical transmembrane segment at phenylalanine 2242–alanine 2256 threads the bilayer. At asparagine 2257–glycine 2293 the chain is on the lumenal side. Residues alanine 2294 to isoleucine 2314 constitute an intramembrane region (helical). Over lysine 2315–isoleucine 2360 the chain is Lumenal. Residues threonine 2361 to leucine 2380 form a helical membrane-spanning segment. The Cytoplasmic segment spans residues proline 2381 to alanine 2421. The helical transmembrane segment at leucine 2422–methionine 2442 threads the bilayer. Residues cysteine 2443–threonine 2445 lie on the Lumenal side of the membrane. The chain crosses the membrane as a helical span at residues proline 2446–glycine 2466. Topologically, residues asparagine 2467–isoleucine 3411 are cytoplasmic. In terms of domain architecture, mRNA cap 0-1 NS5-type MT spans glycine 2507–serine 2771. Residue serine 2562 participates in S-adenosyl-L-methionine binding. Position 2562 is a phosphoserine (serine 2562). Lysine 2567 acts as the For 2'-O-MTase activity in catalysis. Glycine 2592, tryptophan 2593, threonine 2610, leucine 2611, aspartate 2637, and valine 2638 together coordinate S-adenosyl-L-methionine. Aspartate 2652 acts as the For 2'-O-MTase activity in catalysis. Isoleucine 2653 is an S-adenosyl-L-methionine binding site. Active-site for 2'-O-MTase activity residues include lysine 2688 and glutamate 2724. Residue tyrosine 2726 participates in S-adenosyl-L-methionine binding. The Nuclear localization signal motif lies at arginine 2878–arginine 2911. Zn(2+) is bound by residues glutamate 2945, histidine 2949, cysteine 2954, and cysteine 2957. In terms of domain architecture, RdRp catalytic spans glycine 3035–alanine 3187. Zn(2+) is bound by residues histidine 3222, cysteine 3238, and cysteine 3357.

In the N-terminal section; belongs to the class I-like SAM-binding methyltransferase superfamily. mRNA cap 0-1 NS5-type methyltransferase family. In terms of assembly, homodimer. Interacts (via N-terminus) with host EXOC1 (via C-terminus); this interaction results in EXOC1 degradation through the proteasome degradation pathway. As to quaternary structure, forms heterodimers with envelope protein E in the endoplasmic reticulum and Golgi. Homodimer; in the endoplasmic reticulum and Golgi. Interacts with protein prM. Interacts with non-structural protein 1. In terms of assembly, homodimer; Homohexamer when secreted. Interacts with envelope protein E. As to quaternary structure, interacts (via N-terminus) with serine protease NS3. Forms a heterodimer with serine protease NS3. May form homooligomers. In terms of assembly, forms a heterodimer with NS2B. Interacts with non-structural protein 2A (via N-terminus). Interacts with NS4B. Interacts with unphosphorylated RNA-directed RNA polymerase NS5; this interaction stimulates RNA-directed RNA polymerase NS5 guanylyltransferase activity. NS3 interacts with host PDCD6IP; this interaction contributes to virion release. As to quaternary structure, interacts with serine protease NS3. Homodimer. Interacts with host STAT2; this interaction prevents the establishment of cellular antiviral state. Interacts with serine protease NS3. Interacts with host TRIM23; this interaction leads to NS5 ubiquitination. Specific enzymatic cleavages in vivo yield mature proteins. The nascent capsid protein C contains a C-terminal hydrophobic domain that act as a signal sequence for translocation of prM into the lumen of the ER. Mature capsid protein C is cleaved at a site upstream of this hydrophobic domain by NS3. prM is cleaved in post-Golgi vesicles by a host furin, releasing the mature small envelope protein M, and peptide pr. Non-structural protein 2A-alpha, a C-terminally truncated form of non-structural protein 2A, results from partial cleavage by NS3. Specific enzymatic cleavages in vivo yield mature proteins peptide 2K acts as a signal sequence and is removed from the N-terminus of NS4B by the host signal peptidase in the ER lumen. Signal cleavage at the 2K-4B site requires a prior NS3 protease-mediated cleavage at the 4A-2K site. In terms of processing, cleaved in post-Golgi vesicles by a host furin, releasing the mature small envelope protein M, and peptide pr. This cleavage is incomplete as up to 30% of viral particles still carry uncleaved prM. Post-translationally, N-glycosylated. N-glycosylated. The excreted form is glycosylated and this is required for efficient secretion of the protein from infected cells. In terms of processing, polyubiquitinated; ubiquitination is probably mediated by host TRIM23 and is prerequisite for NS5-STAT2 interaction. NS5 is not ISGylated or sumoylated. Post-translationally, acetylated by host KAT5. Acetylation modulates NS3 RNA-binding and unwinding activities and plays an important positive role for viral replication. Phosphorylated on serines residues. This phosphorylation may trigger NS5 nuclear localization.

It is found in the virion. It localises to the host nucleus. Its subcellular location is the host cytoplasm. The protein resides in the host perinuclear region. The protein localises to the secreted. It is found in the virion membrane. It localises to the host endoplasmic reticulum membrane. It carries out the reaction Selective hydrolysis of -Xaa-Xaa-|-Yaa- bonds in which each of the Xaa can be either Arg or Lys and Yaa can be either Ser or Ala.. The enzyme catalyses RNA(n) + a ribonucleoside 5'-triphosphate = RNA(n+1) + diphosphate. It catalyses the reaction a ribonucleoside 5'-triphosphate + H2O = a ribonucleoside 5'-diphosphate + phosphate + H(+). The catalysed reaction is ATP + H2O = ADP + phosphate + H(+). It carries out the reaction a 5'-end (5'-triphosphoguanosine)-ribonucleoside in mRNA + S-adenosyl-L-methionine = a 5'-end (N(7)-methyl 5'-triphosphoguanosine)-ribonucleoside in mRNA + S-adenosyl-L-homocysteine. The enzyme catalyses a 5'-end (N(7)-methyl 5'-triphosphoguanosine)-ribonucleoside in mRNA + S-adenosyl-L-methionine = a 5'-end (N(7)-methyl 5'-triphosphoguanosine)-(2'-O-methyl-ribonucleoside) in mRNA + S-adenosyl-L-homocysteine + H(+). Its function is as follows. Plays a role in virus budding by binding to the cell membrane and gathering the viral RNA into a nucleocapsid that forms the core of a mature virus particle. During virus entry, may induce genome penetration into the host cytoplasm after hemifusion induced by the surface proteins. Can migrate to the cell nucleus where it modulates host functions. In terms of biological role, inhibits RNA silencing by interfering with host Dicer. Prevents premature fusion activity of envelope proteins in trans-Golgi by binding to envelope protein E at pH6.0. After virion release in extracellular space, gets dissociated from E dimers. Functionally, acts as a chaperone for envelope protein E during intracellular virion assembly by masking and inactivating envelope protein E fusion peptide. prM is the only viral peptide matured by host furin in the trans-Golgi network probably to avoid catastrophic activation of the viral fusion activity in acidic Golgi compartment prior to virion release. prM-E cleavage is inefficient, and many virions are only partially matured. These uncleaved prM would play a role in immune evasion. Its function is as follows. May play a role in virus budding. Exerts cytotoxic effects by activating a mitochondrial apoptotic pathway through M ectodomain. May display a viroporin activity. In terms of biological role, binds to host cell surface receptor and mediates fusion between viral and cellular membranes. Envelope protein is synthesized in the endoplasmic reticulum in the form of heterodimer with protein prM. They play a role in virion budding in the ER, and the newly formed immature particle is covered with 60 spikes composed of heterodimer between precursor prM and envelope protein E. The virion is transported to the Golgi apparatus where the low pH causes dissociation of PrM-E heterodimers and formation of E homodimers. prM-E cleavage is inefficient, and many virions are only partially matured. These uncleaved prM would play a role in immune evasion. Involved in immune evasion, pathogenesis and viral replication. Once cleaved off the polyprotein, is targeted to three destinations: the viral replication cycle, the plasma membrane and the extracellular compartment. Essential for viral replication. Required for formation of the replication complex and recruitment of other non-structural proteins to the ER-derived membrane structures. Excreted as a hexameric lipoparticle that plays a role against host immune response. Antagonizing the complement function. Binds to the host macrophages and dendritic cells. Inhibits signal transduction originating from Toll-like receptor 3 (TLR3). Functionally, component of the viral RNA replication complex that functions in virion assembly and antagonizes the host immune response. Its function is as follows. Required cofactor for the serine protease function of NS3. May have membrane-destabilizing activity and form viroporins. In terms of biological role, displays three enzymatic activities: serine protease, NTPase and RNA helicase. NS3 serine protease, in association with NS2B, performs its autocleavage and cleaves the polyprotein at dibasic sites in the cytoplasm: C-prM, NS2A-NS2B, NS2B-NS3, NS3-NS4A, NS4A-2K and NS4B-NS5. NS3 RNA helicase binds RNA and unwinds dsRNA in the 3' to 5' direction. Also plays a role in virus assembly. Regulates the ATPase activity of the NS3 helicase activity. NS4A allows NS3 helicase to conserve energy during unwinding. Functionally, functions as a signal peptide for NS4B and is required for the interferon antagonism activity of the latter. Its function is as follows. Induces the formation of ER-derived membrane vesicles where the viral replication takes place. Inhibits interferon (IFN)-induced host STAT1 phosphorylation and nuclear translocation, thereby preventing the establishment of cellular antiviral state by blocking the IFN-alpha/beta pathway. In terms of biological role, replicates the viral (+) and (-) RNA genome, and performs the capping of genomes in the cytoplasm. NS5 methylates viral RNA cap at guanine N-7 and ribose 2'-O positions. Besides its role in RNA genome replication, also prevents the establishment of cellular antiviral state by blocking the interferon-alpha/beta (IFN-alpha/beta) signaling pathway. IFN-I induces binding of NS5 to host IFN-activated transcription factor STAT2, preventing its transcriptional activity. Host TRIM23 is the E3 ligase that interacts with and polyubiquitinates NS5 to promote its binding to STAT2 and trigger IFN-I signaling inhibition. This chain is Genome polyprotein, found in Aedes aegypti (Yellowfever mosquito).